The chain runs to 199 residues: Recombination protein RecR (199 aa).

The C4-type zinc-finger motif lies at 56 to 71 (CQQCNNYTEQTLCALC). In terms of domain architecture, Toprim spans 79 to 174 (TLLCVVESPA…NISQLAHGIP (96 aa)).

The protein belongs to the RecR family.

May play a role in DNA repair. It seems to be involved in an RecBC-independent recombinational process of DNA repair. It may act with RecF and RecO. The sequence is that of Recombination protein RecR from Legionella pneumophila subsp. pneumophila (strain Philadelphia 1 / ATCC 33152 / DSM 7513).